An 87-amino-acid chain; its full sequence is Small ribosomal subunit protein uS17 (87 aa).

The protein belongs to the universal ribosomal protein uS17 family. As to quaternary structure, part of the 30S ribosomal subunit.

Functionally, one of the primary rRNA binding proteins, it binds specifically to the 5'-end of 16S ribosomal RNA. The polypeptide is Small ribosomal subunit protein uS17 (Aster yellows witches'-broom phytoplasma (strain AYWB)).